Consider the following 75-residue polypeptide: Xibalbin-13 2 (75 aa).

Positions 1 to 27 (MKEANTRRYIYLCLVVVLLSIIITTEA) are cleaved as a signal peptide. Residues 28–30 (EDD) constitute a propeptide that is removed on maturation. 4 cysteine pairs are disulfide-bonded: C34-C49, C41-C54, C48-C65, and C56-C63.

It belongs to the xibalbin-13 family. Expressed by the venom gland and the whole body.

Its subcellular location is the secreted. Probable neurotoxin. Strongly inhibits voltage-gated potassium channels (Kv1.1/KCNA1, Kv1.2/KCNA2, Kv1.3/KCNA3, and Kv1.6/KCNA6, with the highest toxicity against Kv1.1 (85.1% inhibition at 1 uM)) and mildly inhibits sodium channels (Nav1.2/SCN2A, Nav1.4/SCN4A, Nav1.5/SCN5A, Nav1.6/SCN8A, and BgNav). Induces activation of protein kinase A type II (PKA-II) and MAP kinase Erk1/2 in primary nociceptive and non-nociceptive sensory neurons. Does not show cytotoxic activity. Does not have an impact on Ca2+, cAMP, and NO signaling in the cell types analyzed. Does not interfere with the adhesion of leukocytes to endothelial cells. This chain is Xibalbin-13 2, found in Xibalbanus tulumensis (Blind cave remipede).